The sequence spans 1466 residues: MAAHAEELVLNNTSILNVNMSNVTKLTSTNYLMWSRQVHALFDGYELAGFLDGSTTMPPATIGTDAAPRVNPDYTRWKRQDKLIYSAVLGAISMSVQPAVSRATTAAQIWETLRKIYANPSYGHVTQLRTQLKQWTKGTKTIDDYMQGLVTRFDQLALLGKPMDHDEQVERVLENLPEEYKPVIDQIAAKDTPPTLTEIHERLLNHESKILAVSSATVIPITANAVSHRNTTTTNNNNNGNRNNRYDNRNNNNNSKPWQQSSTNFHPNNNQSKPYLGKCQICGVQGHSAKRCSQLQHFLSSVNSQQPPSPFTPWQPRANLALGSPYSSNNWLLDSGATHHITSDFNNLSLHQPYTGGDDVMVADGSTIPISHTGSTSLSTKSRPLNLHNILYVPNIHKNLISVYRLCNANGVSVEFFPASFQVKDLNTGVPLLQGKTKDELYEWPIASSQPVSLFASPSSKATHSSWHARLGHPAPSILNSVISNYSLSVLNPSHKFLSCSDCLINKSNKVPFSQSTINSTRPLEYIYSDVWSSPILSHDNYRYYVIFVDHFTRYTWLYPLKQKSQVKETFITFKNLLENRFQTRIGTFYSDNGGEFVALWEYFSQHGISHLTSPPHTPEHNGLSERKHRHIVETGLTLLSHASIPKTYWPYAFAVAVYLINRLPTPLLQLESPFQKLFGTSPNYDKLRVFGCACYPWLRPYNQHKLDDKSRQCVFLGYSLTQSAYLCLHLQTSRLYISRHVRFDENCFPFSNYLATLSPVQEQRRESSCVWSPHTTLPTRTPVLPAPSCSDPHHAATPPSSPSAPFRNSQVSSSNLDSSFSSSFPSSPEPTAPRQNGPQPTTQPTQTQTQTHSSQNTSQNNPTNESPSQLAQSLSTPAQSSSSSPSPTTSASSSSTSPTPPSILIHPPPPLAQIVNNNNQAPLNTHSMGTRAKAGIIKPNPKYSLAVSLAAESEPRTAIQALKDERWRNAMGSEINAQIGNHTWDLVPPPPSHVTIVGCRWIFTKKYNSDGSLNRYKARLVAKGYNQRPGLDYAETFSPVIKSTSIRIVLGVAVDRSWPIRQLDVNNAFLQGTLTDDVYMSQPPGFIDKDRPNYVCKLRKALYGLKQAPRAWYVELRNYLLTIGFVNSVSDTSLFVLQRGKSIVYMLVYVDDILITGNDPTLLHNTLDNLSQRFSVKDHEELHYFLGIEAKRVPTGLHLSQRRYILDLLARTNMITAKPVTTPMAPSPKLSLYSGTKLTDPTEYRGIVGSLQYLAFTRPDISYAVNRLSQFMHMPTEEHLQALKRILRYLAGTPNHGIFLKKGNTLSLHAYSDADWAGDKDDYVSTNGYIVYLGHHPISWSSKKQKGVVRSSTEAEYRSVANTSSEMQWICSLLTELGIRLTRPPVIYCDNVGATYLCANPVFHSRMKHIAIDYHFIRNQVQSGALRVVHVSTHDQLADTLTKPLSRTAFQNFASKIGVTRVPPS.

The tract at residues 227–270 (SHRNTTTTNNNNNGNRNNRYDNRNNNNNSKPWQQSSTNFHPNNN) is disordered. Positions 229–254 (RNTTTTNNNNNGNRNNRYDNRNNNNN) are enriched in low complexity. Residues 255-270 (SKPWQQSSTNFHPNNN) are compositionally biased toward polar residues. The CCHC-type zinc-finger motif lies at 278-294 (KCQICGVQGHSAKRCSQ). Asp334 functions as the For protease activity in the catalytic mechanism. The Integrase catalytic domain occupies 519-682 (NSTRPLEYIY…SPFQKLFGTS (164 aa)). The Mg(2+) site is built by Asp530 and Asp592. Positions 772–927 (WSPHTTLPTR…NNNQAPLNTH (156 aa)) are disordered. Composition is skewed to low complexity over residues 796–827 (AATP…SFPS) and 836–898 (QNGP…SSTS). The span at 899-912 (PTPPSILIHPPPPL) shows a compositional bias: pro residues. Residues 915 to 927 (IVNNNNQAPLNTH) show a composition bias toward polar residues. One can recognise a Reverse transcriptase Ty1/copia-type domain in the interval 982 to 1225 (NHTWDLVPPP…ITAKPVTTPM (244 aa)).

The catalysed reaction is DNA(n) + a 2'-deoxyribonucleoside 5'-triphosphate = DNA(n+1) + diphosphate. This chain is Retrovirus-related Pol polyprotein from transposon RE1 (RE1), found in Arabidopsis thaliana (Mouse-ear cress).